The sequence spans 921 residues: GID complex subunit 5 (921 aa).

Position 226 is a phosphoserine (Ser226). ARM repeat units follow at residues 491–530, 551–592, 617–656, 683–725, and 729–777; these read VSAL…DFMK, SNLQ…RIAL, NEEK…NLTC, KISI…NLAA, and NKKQ…NLLW. Residues 822-867 form a disordered region; sequence SRGKYYDEPDGDDSSSNANDDEDDDNDEGDDEGDEFVRTPAAKGST. The segment covering 829–855 has biased composition (acidic residues); the sequence is EPDGDDSSSNANDDEDDDNDEGDDEGD.

The protein belongs to the VID28/GID5 family. Identified in the GID/CTLH complex. In the absence of stress, the complex exists as an inactive anticipatory complex (GID(Ant)), composed of VID30/GID1, the E3 ubiquitin-ligase RMD5/GID2, VID28/GID5, GID8, and the RING-like subunit FYV10/GID9, awaiting a substrate receptor to form the active E3 ligase complex. When cells are shifted to glucose-containing medium, the substrate receptor VID24/GID4 is induced and becomes part of the complex, named GID(SR4). Additionally, GID7 transforms the GID(SR4) E3 ligase core into a higher-order supramolecular assembly (Chelator-GID(SR4)) specifically tailored for FBP1 ubiquitination. Under osmotic or heat stress, the substrate receptor GID10 is induced and becomes part of the complex, named GID(SR10). Within the GID complex, interacts directly with RMD5/GID2 and FYV10/GID9, and recruits VID24/GID4 to the complex when cells are shifted to glucose-containing medium.

Its subcellular location is the nucleus. It is found in the cytoplasm. In terms of biological role, component of the GID E3 ligase complex recruiting N termini and catalyzing ubiquitination of proteins targeted for degradation. GID E3 is regulated through assembly with interchangeable N-degron-binding substrate receptors induced by distinct environmental perturbations. Required for the adaptation to the presence of glucose in the growth medium; mediates in association with the substrate receptor VID24/GID4 the degradation of enzymes involved in gluconeogenesis when cells are shifted to glucose-containing medium. Required for proteasome-dependent catabolite degradation of fructose-1,6-bisphosphatase (FBP1), malate dehydrogenase (MDH2), and other gluconeogenic enzymes. The protein is GID complex subunit 5 of Saccharomyces cerevisiae (strain ATCC 204508 / S288c) (Baker's yeast).